We begin with the raw amino-acid sequence, 448 residues long: 5-hydroxytryptamine receptor 7 (448 aa).

At 1–86 (MMDVNSSGRP…INYGRVEKVV (86 aa)) the chain is on the extracellular side. N-linked (GlcNAc...) asparagine glycans are attached at residues Asn5 and Asn69. A helical transmembrane segment spans residues 87 to 111 (IGSILTLITLLTIAGNCLVVISVCF). At 112–121 (VKKLRQPSNY) the chain is on the cytoplasmic side. The helical transmembrane segment at 122 to 143 (LIVSLALADLSVAVAVMPFVSV) threads the bilayer. Residues 144–155 (TDLIGGKWIFGH) lie on the Extracellular side of the membrane. Residues 156–181 (FFCNVFIAMDVMCCTASIMTLCVISI) traverse the membrane as a helical segment. Cys158 and Cys234 are disulfide-bonded. Asp165 serves as a coordination point for serotonin. Topologically, residues 182 to 201 (DRYLGITRPLTYPVRQNGKC) are cytoplasmic. A helical transmembrane segment spans residues 202-222 (MAKMILSVWLLSASITLPPLF). Over 223–240 (GWAQNVNDDKVCLISQDF) the chain is Extracellular. Residues 241 to 263 (GYTIYSTAVAFYIPMSVMLFMYY) traverse the membrane as a helical segment. The Cytoplasmic segment spans residues 264–329 (QIYKAARKSA…SIFKREQKAA (66 aa)). A helical transmembrane segment spans residues 330 to 355 (TTLGIIVGAFTVCWLPFFLLSTARPF). The Extracellular portion of the chain corresponds to 356-366 (ICGTSCSCIPL). The helical transmembrane segment at 367-390 (WVERTCLWLGYANSLINPFIYAFF) threads the bilayer. Residues 391-448 (NRDLRTTYRSLLQCQYRNINRKLSAAGMHEALKLAERPERSEFVLQNSDHCGKKGHDT) are Cytoplasmic-facing. A lipid anchor (S-palmitoyl cysteine) is attached at Cys404.

It belongs to the G-protein coupled receptor 1 family. Thalamus, hypothalamus, and the hippocampal rudiments.

It localises to the cell membrane. In terms of biological role, G-protein coupled receptor for 5-hydroxytryptamine (serotonin), a biogenic hormone that functions as a neurotransmitter, a hormone and a mitogen. Ligand binding causes a conformation change that triggers signaling via guanine nucleotide-binding proteins (G proteins) and modulates the activity of downstream effectors. HTR7 is coupled to G(s) G alpha proteins and mediates activation of adenylate cyclase activity. The chain is 5-hydroxytryptamine receptor 7 from Rattus norvegicus (Rat).